The sequence spans 580 residues: Extracellular protease (580 aa).

The N-terminal stretch at 1–32 (MSTASLRKRTGSLTILGASALTSLLLAMPAFA) is a signal peptide. A propeptide spanning residues 33 to 136 (GEVYLDGLAT…VEVDQILHAT (104 aa)) is cleaved from the precursor. One can recognise a Peptidase S8 domain in the interval 147–465 (QWAFGTTNAG…AGIVNADAAV (319 aa)). Catalysis depends on charge relay system residues D177 and H237. 2 disulfide bridges follow: C225-C273 and C315-C352. S409 acts as the Charge relay system in catalysis. The cysteines at positions 450 and 454 are disulfide-linked.

It belongs to the peptidase S8 family.

The protein resides in the secreted. The chain is Extracellular protease from Xanthomonas campestris pv. campestris (strain ATCC 33913 / DSM 3586 / NCPPB 528 / LMG 568 / P 25).